Consider the following 416-residue polypeptide: MDKFQIHGNGPLKGEIRVSGAKNAALPILCAGLLTADTVALDNVPNLQDVRTTLKLLRLMGMQAEFDGARVTLNGADVNVLEAPYELVKTMRASILVLGPLVARFGEARVSLPGGCGIGARPVDQHIKGLQAMGAEITIEHGFIHARAKRLKGARVVTDMITVTGTENLLMAATLAEGETVLENAAREPEVTDLAHLLVKMGAKIDGIGTDRLVVHGVERLHGASHSVIADRIEAGTFLCAAAATLGDLVLRGVQPDILDTVLDKLREAGARLETGDDWIRLAMPHRAKAVSFRTSEYPAFPTDMQAQFMALNAVAEGTARVTETIFENRFMHVQELNRLGADITVEGNTAVVNGVPRLSGANVMATDLRASASLVIAGLVADGETVIDRIYHLDRGYDRMEDKLSAVGAKIRRIA.

Phosphoenolpyruvate is bound at residue 22–23 (KN). R92 lines the UDP-N-acetyl-alpha-D-glucosamine pocket. C116 serves as the catalytic Proton donor. A 2-(S-cysteinyl)pyruvic acid O-phosphothioketal modification is found at C116. Residues 121–125 (RPVDQ), D304, and I326 contribute to the UDP-N-acetyl-alpha-D-glucosamine site.

The protein belongs to the EPSP synthase family. MurA subfamily.

Its subcellular location is the cytoplasm. It carries out the reaction phosphoenolpyruvate + UDP-N-acetyl-alpha-D-glucosamine = UDP-N-acetyl-3-O-(1-carboxyvinyl)-alpha-D-glucosamine + phosphate. It participates in cell wall biogenesis; peptidoglycan biosynthesis. Its function is as follows. Cell wall formation. Adds enolpyruvyl to UDP-N-acetylglucosamine. The protein is UDP-N-acetylglucosamine 1-carboxyvinyltransferase of Cupriavidus taiwanensis (strain DSM 17343 / BCRC 17206 / CCUG 44338 / CIP 107171 / LMG 19424 / R1) (Ralstonia taiwanensis (strain LMG 19424)).